The primary structure comprises 566 residues: Solute carrier family 2, facilitated glucose transporter member 9 (566 aa).

The disordered stretch occupies residues 1–31; it reads MARKQNRNSKELGLAPLADDTSHAGPPGPGR. Topologically, residues 1-51 are cytoplasmic; that stretch reads MARKQNRNSKELGLAPLADDTSHAGPPGPGRALLECDHLRSGLPDGRRRKD. Ser-9 is subject to Phosphoserine. The chain crosses the membrane as a helical span at residues 52–72; sequence WSCSLLVASLAGAFGSSFLYG. At 73 to 107 the chain is on the extracellular side; that stretch reads YNLSVVNAPTPYIKAFYNESWERRHGRPIDPDTLT. Residues Asn-74 and Asn-90 are each glycosylated (N-linked (GlcNAc...) asparagine). Residues 108-128 traverse the membrane as a helical segment; it reads LLWSVTVSIFAIGGLVGTLMV. At 129–140 the chain is on the cytoplasmic side; that stretch reads KMIGKVLGRKHT. A helical transmembrane segment spans residues 141–161; sequence LLANNGFAISAALLMACSLQA. At 162-171 the chain is on the extracellular side; the sequence is GAFEMLIVGR. The helical transmembrane segment at 172–192 threads the bilayer; it reads FIMGIDGGIALSVLPMYLSEI. Residues 193-200 lie on the Cytoplasmic side of the membrane; the sequence is SPKEIRGS. A helical membrane pass occupies residues 201 to 221; sequence LGQVTAIFICIGVFTGQLLGL. The Extracellular portion of the chain corresponds to 222–231; it reads PELLGKESTW. Residues 232-252 traverse the membrane as a helical segment; that stretch reads PYLFGVIVVPAVVQLLSLPFL. Over 253-316 the chain is Cytoplasmic; it reads PDSPRYLLLE…LRAPYVRWQV (64 aa). A helical membrane pass occupies residues 317–337; the sequence is VTVIVTMACYQLCGLNAIWFY. At 338 to 354 the chain is on the extracellular side; the sequence is TNSIFGKAGIPPAKIPY. A helical membrane pass occupies residues 355–375; it reads VTLSTGGIETLAAIFSGLVIE. Residues 376-381 lie on the Cytoplasmic side of the membrane; the sequence is HLGRRP. Residues 382-402 traverse the membrane as a helical segment; that stretch reads LLIGGFGLMALFFGTLTVTLT. The Extracellular segment spans residues 403–415; it reads LQDRAPWVPYLSI. A helical membrane pass occupies residues 416 to 436; it reads VGILAIIASFCSGPGGIPFIL. The Cytoplasmic segment spans residues 437 to 451; it reads TGEFFQQSQRPAAFI. A helical membrane pass occupies residues 452 to 472; it reads IAGTVNWLSNFAVGLLFPFIQ. Residues 473–478 lie on the Extracellular side of the membrane; the sequence is KSLDTY. A helical membrane pass occupies residues 479 to 499; that stretch reads CFLVFATICMTGAIYLYFVLP. At 500 to 566 the chain is on the cytoplasmic side; sequence ETKNRTYAEI…YMDDLTFQET (67 aa). At Ser-514 the chain carries Phosphoserine. The segment covering 524–539 has biased composition (basic and acidic residues); the sequence is EKIDSAVTDGKTKGRP. Positions 524–543 are disordered; the sequence is EKIDSAVTDGKTKGRPEQVS.

Belongs to the major facilitator superfamily. Sugar transporter (TC 2.A.1.1) family.

The protein localises to the basolateral cell membrane. It localises to the apical cell membrane. It catalyses the reaction urate(out) = urate(in). Functionally, high-capacity urate transporter, which may play a role in the urate reabsorption by proximal tubules. May have a residual high-affinity, low-capacity glucose and fructose transporter activity. Transports urate at rates 45- to 60-fold faster than glucose. Does not transport galactose. May mediate small uptake of adenine but not of other nucleobases. This is Solute carrier family 2, facilitated glucose transporter member 9 from Pongo abelii (Sumatran orangutan).